A 259-amino-acid polypeptide reads, in one-letter code: Proteasome subunit alpha type-7 (259 aa).

It belongs to the peptidase T1A family. The 26S proteasome consists of a 20S proteasome core and two 19S regulatory subunits. The 20S proteasome core is composed of 28 subunits that are arranged in four stacked rings, resulting in a barrel-shaped structure. The two end rings are each formed by seven alpha subunits, and the two central rings are each formed by seven beta subunits. The catalytic chamber with the active sites is on the inside of the barrel.

It localises to the cytoplasm. The protein localises to the nucleus. Its function is as follows. The proteasome is a multicatalytic proteinase complex which is characterized by its ability to cleave peptides with Arg, Phe, Tyr, Leu, and Glu adjacent to the leaving group at neutral or slightly basic pH. The proteasome has an ATP-dependent proteolytic activity. In Solanum lycopersicum (Tomato), this protein is Proteasome subunit alpha type-7 (PAD1).